We begin with the raw amino-acid sequence, 198 residues long: Formate-dependent nitrite reductase complex subunit NrfG (198 aa).

2 TPR repeats span residues Ser73–Asn106 and Ile144–Arg177.

Functionally, required for formate-dependent nitrite reduction. Not required for the biosynthesis of any of the c-type cytochromes nor for the secretion of the periplasmic cytochromes. This is Formate-dependent nitrite reductase complex subunit NrfG (nrfG) from Escherichia coli O157:H7.